The chain runs to 334 residues: Tryptophan--tRNA ligase (334 aa).

ATP-binding positions include 11–13 (QPS) and 19–20 (GN). The 'HIGH' region signature appears at 12 to 20 (PSGELTIGN). Asp-135 lines the L-tryptophan pocket. ATP contacts are provided by residues 147–149 (GED), Val-186, and 195–199 (KMSKS). Positions 195 to 199 (KMSKS) match the 'KMSKS' region motif.

This sequence belongs to the class-I aminoacyl-tRNA synthetase family. In terms of assembly, homodimer.

It localises to the cytoplasm. The catalysed reaction is tRNA(Trp) + L-tryptophan + ATP = L-tryptophyl-tRNA(Trp) + AMP + diphosphate + H(+). Catalyzes the attachment of tryptophan to tRNA(Trp). The protein is Tryptophan--tRNA ligase of Shigella flexneri.